The sequence spans 232 residues: Thiamine import ATP-binding protein ThiQ (232 aa).

In terms of domain architecture, ABC transporter spans 2 to 230; sequence LKLTDITWLY…KASASAILGI (229 aa). ATP is bound at residue 32–39; the sequence is GPSGAGKS.

It belongs to the ABC transporter superfamily. Thiamine importer (TC 3.A.1.19.1) family. In terms of assembly, the complex is composed of two ATP-binding proteins (ThiQ), two transmembrane proteins (ThiP) and a solute-binding protein (ThiB).

The protein resides in the cell inner membrane. It catalyses the reaction thiamine(out) + ATP + H2O = thiamine(in) + ADP + phosphate + H(+). In terms of biological role, part of the ABC transporter complex ThiBPQ involved in thiamine import. Responsible for energy coupling to the transport system. The chain is Thiamine import ATP-binding protein ThiQ from Shigella boydii serotype 4 (strain Sb227).